A 393-amino-acid chain; its full sequence is Elongation factor Tu (393 aa).

A tr-type G domain is found at 10-203 (KPHVNIGTIG…AVDSYIPEPV (194 aa)). Residues 19 to 26 (GHVDHGKT) are G1. 19–26 (GHVDHGKT) contacts GTP. Thr-26 provides a ligand contact to Mg(2+). The segment at 60–64 (GITIS) is G2. Residues 81–84 (DCPG) form a G3 region. Residues 81-85 (DCPGH) and 136-139 (NKVD) contribute to the GTP site. The segment at 136 to 139 (NKVD) is G4. Residues 173–175 (SAL) are G5.

Belongs to the TRAFAC class translation factor GTPase superfamily. Classic translation factor GTPase family. EF-Tu/EF-1A subfamily. In terms of assembly, monomer.

The protein resides in the cytoplasm. It catalyses the reaction GTP + H2O = GDP + phosphate + H(+). Functionally, GTP hydrolase that promotes the GTP-dependent binding of aminoacyl-tRNA to the A-site of ribosomes during protein biosynthesis. In Prosthecochloris aestuarii (strain DSM 271 / SK 413), this protein is Elongation factor Tu.